The primary structure comprises 749 residues: Adenosylcobalamin-dependent ribonucleoside-triphosphate reductase (749 aa).

C124 and C427 are disulfide-bonded. The tract at residues S152–M163 is effector region-1. The interval T173 to V321 is effector region-2. Residues C416 and E418 contribute to the active site. The interval F573–V634 is adenosylcobalamin-binding-1. Positions F693–E734 are adenosylcobalamin-binding-2.

Belongs to the class II ribonucleoside-triphosphate reductase family. Monomer. Requires adenosylcob(III)alamin as cofactor.

It carries out the reaction a 2'-deoxyribonucleoside 5'-triphosphate + [thioredoxin]-disulfide + H2O = a ribonucleoside 5'-triphosphate + [thioredoxin]-dithiol. With respect to regulation, allosterically regulated by ATP and dNTP. The protein is Adenosylcobalamin-dependent ribonucleoside-triphosphate reductase (rtpR) of Levilactobacillus brevis (strain ATCC 367 / BCRC 12310 / CIP 105137 / JCM 1170 / LMG 11437 / NCIMB 947 / NCTC 947) (Lactobacillus brevis).